Consider the following 280-residue polypeptide: Probable aquaporin PIP2-8 (280 aa).

The segment at 1–21 (MAAGSGSGSNPKDYQDPPPAP) is disordered. The next 2 helical transmembrane spans lie at 36–56 (AAIA…STVI) and 70–92 (LGIA…GISG). The short motif at 96–98 (NPA) is the NPA 1 element. A run of 3 helical transmembrane segments spans residues 113–135 (RAAL…ARAM), 156–176 (SAGA…YTVF), and 192–212 (VLAP…TIPI). The short motif at 218–220 (NPA) is the NPA 2 element. The helical transmembrane segment at 236–256 (AWSHLWIFWVGPFAGAAAAMI) threads the bilayer.

This sequence belongs to the MIP/aquaporin (TC 1.A.8) family. PIP (TC 1.A.8.11) subfamily. Expressed in leaves and at lower levels in roots.

It localises to the cell membrane. Aquaporins facilitate the transport of water and small neutral solutes across cell membranes. The sequence is that of Probable aquaporin PIP2-8 (PIP2-8) from Oryza sativa subsp. japonica (Rice).